An 89-amino-acid chain; its full sequence is MAHKKAGGSSRNGRDSIGRRLGVKKYGGEAVGAGNILVRQRGTKFWPGEGVGMGKDHTIFATVDGAVKFHKGLKKRTFISVLPVAEAAE.

Residues 1-20 (MAHKKAGGSSRNGRDSIGRR) form a disordered region.

This sequence belongs to the bacterial ribosomal protein bL27 family.

This chain is Large ribosomal subunit protein bL27, found in Ruegeria pomeroyi (strain ATCC 700808 / DSM 15171 / DSS-3) (Silicibacter pomeroyi).